Here is a 354-residue protein sequence, read N- to C-terminus: Photosystem II D2 protein (354 aa).

Thr2 bears the N-acetylthreonine mark. Phosphothreonine is present on Thr2. A helical transmembrane segment spans residues 42–62 (CAYFALGGFFTGNTFVTSWYT). His119 is a chlorophyll a binding site. The helical transmembrane segment at 126–142 (GFMLRQFEIARAVKIRP) threads the bilayer. 2 residues coordinate pheophytin a: Gln131 and Asn144. Residues 154–167 (VFVSVFLIYPLGQQ) traverse the membrane as a helical segment. His199 contributes to the chlorophyll a binding site. Residues 209-229 (AALLCAIHGATVENTLFEDGD) traverse the membrane as a helical segment. 2 residues coordinate a plastoquinone: His216 and Phe263. Residue His216 coordinates Fe cation. His270 provides a ligand contact to Fe cation. The chain crosses the membrane as a helical span at residues 280–296 (GLWMSAIGVVGLALNLR).

It belongs to the reaction center PufL/M/PsbA/D family. PSII is composed of 1 copy each of membrane proteins PsbA, PsbB, PsbC, PsbD, PsbE, PsbF, PsbH, PsbI, PsbJ, PsbK, PsbL, PsbM, PsbT, PsbX, PsbY, PsbZ, Psb30/Ycf12, at least 3 peripheral proteins of the oxygen-evolving complex and a large number of cofactors. It forms dimeric complexes. Requires The D1/D2 heterodimer binds P680, chlorophylls that are the primary electron donor of PSII, and subsequent electron acceptors. It shares a non-heme iron and each subunit binds pheophytin, quinone, additional chlorophylls, carotenoids and lipids. There is also a Cl(-1) ion associated with D1 and D2, which is required for oxygen evolution. The PSII complex binds additional chlorophylls, carotenoids and specific lipids. as cofactor.

The protein localises to the plastid. It localises to the chloroplast thylakoid membrane. It catalyses the reaction 2 a plastoquinone + 4 hnu + 2 H2O = 2 a plastoquinol + O2. Photosystem II (PSII) is a light-driven water:plastoquinone oxidoreductase that uses light energy to abstract electrons from H(2)O, generating O(2) and a proton gradient subsequently used for ATP formation. It consists of a core antenna complex that captures photons, and an electron transfer chain that converts photonic excitation into a charge separation. The D1/D2 (PsbA/PsbD) reaction center heterodimer binds P680, the primary electron donor of PSII as well as several subsequent electron acceptors. D2 is needed for assembly of a stable PSII complex. This Mesostigma viride (Green alga) protein is Photosystem II D2 protein.